Consider the following 408-residue polypeptide: LL-diaminopimelate aminotransferase (408 aa).

2 residues coordinate substrate: Y15 and G42. Residues Y72, 108-109, Y132, N187, Y218, and 246-248 each bind pyridoxal 5'-phosphate; these read SK and SFS. Residues K109, Y132, and N187 each coordinate substrate. K249 bears the N6-(pyridoxal phosphate)lysine mark. 2 residues coordinate pyridoxal 5'-phosphate: R257 and N292. Positions 292 and 388 each coordinate substrate.

The protein belongs to the class-I pyridoxal-phosphate-dependent aminotransferase family. LL-diaminopimelate aminotransferase subfamily. In terms of assembly, homodimer. Pyridoxal 5'-phosphate is required as a cofactor.

It catalyses the reaction (2S,6S)-2,6-diaminopimelate + 2-oxoglutarate = (S)-2,3,4,5-tetrahydrodipicolinate + L-glutamate + H2O + H(+). Its pathway is amino-acid biosynthesis; L-lysine biosynthesis via DAP pathway; LL-2,6-diaminopimelate from (S)-tetrahydrodipicolinate (aminotransferase route): step 1/1. Involved in the synthesis of meso-diaminopimelate (m-DAP or DL-DAP), required for both lysine and peptidoglycan biosynthesis. Catalyzes the direct conversion of tetrahydrodipicolinate to LL-diaminopimelate. This chain is LL-diaminopimelate aminotransferase, found in Leptospira biflexa serovar Patoc (strain Patoc 1 / Ames).